The chain runs to 173 residues: NADH-ubiquinone oxidoreductase chain 6 (173 aa).

5 helical membrane passes run 1-21, 27-47, 48-68, 87-107, and 139-159; these read MTYF…AVAS, YGVV…LSLG, VSFV…VVFV, VVGY…VGGF, and CGVG…FVVL.

Belongs to the complex I subunit 6 family.

It localises to the mitochondrion membrane. It catalyses the reaction a ubiquinone + NADH + 5 H(+)(in) = a ubiquinol + NAD(+) + 4 H(+)(out). Its function is as follows. Core subunit of the mitochondrial membrane respiratory chain NADH dehydrogenase (Complex I) that is believed to belong to the minimal assembly required for catalysis. Complex I functions in the transfer of electrons from NADH to the respiratory chain. The immediate electron acceptor for the enzyme is believed to be ubiquinone. The sequence is that of NADH-ubiquinone oxidoreductase chain 6 (MT-ND6) from Aethia pusilla (Least auklet).